The primary structure comprises 206 residues: Large ribosomal subunit protein uL4 (206 aa).

A disordered region spans residues 44–77 (RQGTRAQKDRQTVKHSTKKPWRQKGTGRARAGMT). Residues 56–70 (VKHSTKKPWRQKGTG) show a composition bias toward basic residues.

It belongs to the universal ribosomal protein uL4 family. In terms of assembly, part of the 50S ribosomal subunit.

In terms of biological role, one of the primary rRNA binding proteins, this protein initially binds near the 5'-end of the 23S rRNA. It is important during the early stages of 50S assembly. It makes multiple contacts with different domains of the 23S rRNA in the assembled 50S subunit and ribosome. Functionally, forms part of the polypeptide exit tunnel. This is Large ribosomal subunit protein uL4 from Methylibium petroleiphilum (strain ATCC BAA-1232 / LMG 22953 / PM1).